A 556-amino-acid polypeptide reads, in one-letter code: Double-strand-break repair protein rad21-like protein 1 (556 aa).

It belongs to the rad21 family. In terms of assembly, component of some meiotic cohesin complex composed of the SMC1 (SMC1A or SMC1B) and SMC3 heterodimer attached via their hinge domain, RAD21L which link them, and STAG3.

Its subcellular location is the nucleus. The protein localises to the chromosome. Meiosis-specific component of some cohesin complex required during the initial steps of prophase I in male meiosis. Probably required during early meiosis in males for separation of sister chromatids and homologous chromosomes. Replaces RAD21 in premeiotic S phase (during early stages of prophase I), while RAD21 reappears in later stages of prophase I. Involved in synaptonemal complex assembly, synapsis initiation and crossover recombination between homologous chromosomes during prophase I. This chain is Double-strand-break repair protein rad21-like protein 1 (RAD21L1), found in Homo sapiens (Human).